The chain runs to 342 residues: Ferredoxin--NADP reductase (342 aa).

Positions 17, 36, 44, 49, 89, 124, 289, and 330 each coordinate FAD.

The protein belongs to the ferredoxin--NADP reductase type 2 family. Homodimer. Requires FAD as cofactor.

It catalyses the reaction 2 reduced [2Fe-2S]-[ferredoxin] + NADP(+) + H(+) = 2 oxidized [2Fe-2S]-[ferredoxin] + NADPH. The sequence is that of Ferredoxin--NADP reductase from Nitrobacter hamburgensis (strain DSM 10229 / NCIMB 13809 / X14).